The chain runs to 258 residues: Imidazole glycerol phosphate synthase subunit HisF (258 aa).

Catalysis depends on residues Asp11 and Asp130.

Belongs to the HisA/HisF family. Heterodimer of HisH and HisF.

The protein resides in the cytoplasm. The catalysed reaction is 5-[(5-phospho-1-deoxy-D-ribulos-1-ylimino)methylamino]-1-(5-phospho-beta-D-ribosyl)imidazole-4-carboxamide + L-glutamine = D-erythro-1-(imidazol-4-yl)glycerol 3-phosphate + 5-amino-1-(5-phospho-beta-D-ribosyl)imidazole-4-carboxamide + L-glutamate + H(+). Its pathway is amino-acid biosynthesis; L-histidine biosynthesis; L-histidine from 5-phospho-alpha-D-ribose 1-diphosphate: step 5/9. In terms of biological role, IGPS catalyzes the conversion of PRFAR and glutamine to IGP, AICAR and glutamate. The HisF subunit catalyzes the cyclization activity that produces IGP and AICAR from PRFAR using the ammonia provided by the HisH subunit. This chain is Imidazole glycerol phosphate synthase subunit HisF, found in Haemophilus influenzae (strain PittEE).